The following is a 291-amino-acid chain: Ribosomal RNA small subunit methyltransferase A (291 aa).

The S-adenosyl-L-methionine site is built by Asn27, Leu29, Gly54, Glu75, Asp100, and Asn125.

It belongs to the class I-like SAM-binding methyltransferase superfamily. rRNA adenine N(6)-methyltransferase family. RsmA subfamily.

The protein resides in the cytoplasm. The enzyme catalyses adenosine(1518)/adenosine(1519) in 16S rRNA + 4 S-adenosyl-L-methionine = N(6)-dimethyladenosine(1518)/N(6)-dimethyladenosine(1519) in 16S rRNA + 4 S-adenosyl-L-homocysteine + 4 H(+). Its function is as follows. Specifically dimethylates two adjacent adenosines (A1518 and A1519) in the loop of a conserved hairpin near the 3'-end of 16S rRNA in the 30S particle. May play a critical role in biogenesis of 30S subunits. The polypeptide is Ribosomal RNA small subunit methyltransferase A (Streptococcus mutans serotype c (strain ATCC 700610 / UA159)).